The primary structure comprises 348 residues: GPALPP motifs-containing protein 1 (348 aa).

2 disordered regions span residues 1-163 (MARD…AKGP) and 177-317 (QRMK…DLKV). At Ala-2 the chain carries N-acetylalanine. The GPALPP motif 1 signature appears at 7 to 12 (GPALPP). Positions 14-27 (FKERATVEDQERDP) are enriched in basic and acidic residues. At Ser-28 the chain carries Phosphoserine. The GPALPP motif 2 motif lies at 32–37 (GPALPP). Residues 41-59 (SSSSDSSDSNEDSSSLSEE) show a composition bias toward low complexity. Positions 60–69 (GNQESEEDDA) are enriched in acidic residues. The GPALPP motif 3 motif lies at 93 to 98 (GPALPP). Phosphoserine is present on Ser-106. Over residues 108–117 (PRPIIGPALP) the composition is skewed to pro residues. The short motif at 113–118 (GPALPP) is the GPALPP motif 4 element. A phosphoserine mark is found at Ser-138, Ser-143, and Ser-148. Over residues 144 to 154 (EEAESGEDEDI) the composition is skewed to acidic residues. Composition is skewed to basic and acidic residues over residues 177–195 (QRMK…KPVT), 235–269 (PADR…KRLA), 277–287 (ESKRSESLMDI), and 295–317 (KAAE…DLKV). Residues Lys-279 and Lys-316 each participate in a glycyl lysine isopeptide (Lys-Gly) (interchain with G-Cter in SUMO2) cross-link.

This Rattus norvegicus (Rat) protein is GPALPP motifs-containing protein 1 (Gpalpp1).